A 299-amino-acid polypeptide reads, in one-letter code: UDP-N-acetylenolpyruvoylglucosamine reductase (299 aa).

The 166-residue stretch at 26 to 191 folds into the FAD-binding PCMH-type domain; the sequence is GIGGPAKYFV…VSATFQLNAS (166 aa). Residue R170 is part of the active site. The active-site Proton donor is C218. E288 is an active-site residue.

Belongs to the MurB family. FAD serves as cofactor.

It localises to the cytoplasm. It catalyses the reaction UDP-N-acetyl-alpha-D-muramate + NADP(+) = UDP-N-acetyl-3-O-(1-carboxyvinyl)-alpha-D-glucosamine + NADPH + H(+). It participates in cell wall biogenesis; peptidoglycan biosynthesis. In terms of biological role, cell wall formation. In Protochlamydia amoebophila (strain UWE25), this protein is UDP-N-acetylenolpyruvoylglucosamine reductase.